The chain runs to 218 residues: Capsid protein (218 aa).

Met1 carries the N-acetylmethionine; by host modification. The interval 1–28 is disordered; the sequence is MDKSESTSVGRNRRRRPRRGSRSAPSSA. Positions 11 to 21 are enriched in basic residues; sequence RNRRRRPRRGS.

It belongs to the cucumovirus capsid protein family.

Its subcellular location is the virion. Functionally, capsid protein. Probably binds RNA and plays a role in packaging. The polypeptide is Capsid protein (Cucumber mosaic virus (strain E5) (CMV)).